Here is a 271-residue protein sequence, read N- to C-terminus: Interleukin-1 alpha (271 aa).

Residues 1–112 (MAKVPDMFED…DSEEEIIKPR (112 aa)) constitute a propeptide that is removed on maturation. Lysine 82 carries the post-translational modification N6-acetyllysine. 2 N6-myristoyl lysine lipidation sites follow: lysine 82 and lysine 83. Residues 82 to 86 (KKRRL) are nuclear localization signal (NLS). Residue serine 87 is modified to Phosphoserine. N-linked (GlcNAc...) asparagine glycans are attached at residues asparagine 102 and asparagine 141.

Belongs to the IL-1 family. In terms of assembly, monomer. Interacts with TMED10; the interaction mediates the translocation from the cytoplasm into the ERGIC (endoplasmic reticulum-Golgi intermediate compartment) and thereby secretion. Interacts with IL1R1. Interacts with S100A13; this interaction is the first step in the export of IL1A, followed by direct translocation of this complex across the plasma membrane. Acetylated within its nuclear localization sequence, which impacts subcellular localization. Post-translationally, proteolytic processed by CAPN1 in a calcium-dependent manner. Cleavage from 31 kDa precursor to 18 kDa biologically active molecules. In terms of processing, phosphorylated. Phosphorylation greatly enhances susceptibility to digestion and promotes the conversion of pre-IL1A alpha to the biologically active IL1A.

It localises to the nucleus. Its subcellular location is the cytoplasm. The protein localises to the secreted. Cytokine constitutively present intracellularly in nearly all resting non-hematopoietic cells that plays an important role in inflammation and bridges the innate and adaptive immune systems. After binding to its receptor IL1R1 together with its accessory protein IL1RAP, forms the high affinity interleukin-1 receptor complex. Signaling involves the recruitment of adapter molecules such as MYD88, IRAK1 or IRAK4. In turn, mediates the activation of NF-kappa-B and the three MAPK pathways p38, p42/p44 and JNK pathways. Within the cell, acts as an alarmin and cell death results in its liberation in the extracellular space after disruption of the cell membrane to induce inflammation and alert the host to injury or damage. In addition to its role as a danger signal, which occurs when the cytokine is passively released by cell necrosis, directly senses DNA damage and acts as a signal for genotoxic stress without loss of cell integrity. This is Interleukin-1 alpha (IL1A) from Homo sapiens (Human).